A 163-amino-acid polypeptide reads, in one-letter code: Nucleotide-binding protein Cla_1551 (163 aa).

This sequence belongs to the YajQ family.

In terms of biological role, nucleotide-binding protein. This is Nucleotide-binding protein Cla_1551 from Campylobacter lari (strain RM2100 / D67 / ATCC BAA-1060).